Consider the following 472-residue polypeptide: 3-isopropylmalate dehydratase large subunit (472 aa).

Residues Cys353, Cys414, and Cys417 each coordinate [4Fe-4S] cluster.

The protein belongs to the aconitase/IPM isomerase family. LeuC type 1 subfamily. Heterodimer of LeuC and LeuD. The cofactor is [4Fe-4S] cluster.

It carries out the reaction (2R,3S)-3-isopropylmalate = (2S)-2-isopropylmalate. It functions in the pathway amino-acid biosynthesis; L-leucine biosynthesis; L-leucine from 3-methyl-2-oxobutanoate: step 2/4. In terms of biological role, catalyzes the isomerization between 2-isopropylmalate and 3-isopropylmalate, via the formation of 2-isopropylmaleate. The protein is 3-isopropylmalate dehydratase large subunit of Psychrobacter cryohalolentis (strain ATCC BAA-1226 / DSM 17306 / VKM B-2378 / K5).